We begin with the raw amino-acid sequence, 380 residues long: MKSVGLITEYNPFHNGHLYHAQQSKLQSDAEISIAIMSGNFVMRGEPAIYNKFLRTKMALSGVDLVVELPAIASLSSSDYFATFAIKVAHYLDIDTIAFGSEINDISRLENVASNINSLEQSSYFQDLIKQGNSYAKIVHDLIDDQQVLRSPNNILGVAYIKAISNIAPTIKRIAIQRQSTAHHDQEIKHDNFASGSAIRHALLNKENTWKDVVPADIKHLYETPHLLKKQTFNFIKYNILSRSSEELSHIYTMSEGFEHRLKSNIQNAQDFDTYMSLIKTKRFTYTHIQRVLMQILLNINKSDFDDEIRGVRILGMNQRGQQYLKYLKKQFPNRLYVTNINKESASLLKNEIKATHIYNLISGQRANDFNTPVIINKKN.

ATP is bound by residues 7–20, glycine 100, asparagine 153, and arginine 178; that span reads ITEYNPFHNGHLYH.

The protein belongs to the TmcAL family.

The protein localises to the cytoplasm. It catalyses the reaction cytidine(34) in elongator tRNA(Met) + acetate + ATP = N(4)-acetylcytidine(34) in elongator tRNA(Met) + AMP + diphosphate. Its function is as follows. Catalyzes the formation of N(4)-acetylcytidine (ac(4)C) at the wobble position of elongator tRNA(Met), using acetate and ATP as substrates. First activates an acetate ion to form acetyladenylate (Ac-AMP) and then transfers the acetyl group to tRNA to form ac(4)C34. The sequence is that of tRNA(Met) cytidine acetate ligase from Staphylococcus haemolyticus (strain JCSC1435).